The following is a 577-amino-acid chain: Aspartate--tRNA ligase (577 aa).

E171 contributes to the L-aspartate binding site. The interval 195–198 (QLFK) is aspartate. Residue R217 coordinates L-aspartate. ATP contacts are provided by residues 217–219 (RDE) and Q226. H437 contributes to the L-aspartate binding site. E472 provides a ligand contact to ATP. R479 serves as a coordination point for L-aspartate. An ATP-binding site is contributed by 524–527 (GFDR).

Belongs to the class-II aminoacyl-tRNA synthetase family. Type 1 subfamily. In terms of assembly, homodimer.

It localises to the cytoplasm. It carries out the reaction tRNA(Asp) + L-aspartate + ATP = L-aspartyl-tRNA(Asp) + AMP + diphosphate. Its function is as follows. Catalyzes the attachment of L-aspartate to tRNA(Asp) in a two-step reaction: L-aspartate is first activated by ATP to form Asp-AMP and then transferred to the acceptor end of tRNA(Asp). The sequence is that of Aspartate--tRNA ligase from Deinococcus geothermalis (strain DSM 11300 / CIP 105573 / AG-3a).